Reading from the N-terminus, the 205-residue chain is Small ribosomal subunit protein uS4 (205 aa).

Over residues 1 to 12 (MSKRIQAKHKLD) the composition is skewed to basic residues. Positions 1–49 (MSKRIQAKHKLDRRMGQNIWGRPKSPVNRREYGPGQHGQRRKGKLSDFG) are disordered. In terms of domain architecture, S4 RNA-binding spans 94 to 156 (RRLDAVIYRA…SKQLEIVVVA (63 aa)).

It belongs to the universal ribosomal protein uS4 family. In terms of assembly, part of the 30S ribosomal subunit. Contacts protein S5. The interaction surface between S4 and S5 is involved in control of translational fidelity.

One of the primary rRNA binding proteins, it binds directly to 16S rRNA where it nucleates assembly of the body of the 30S subunit. Its function is as follows. With S5 and S12 plays an important role in translational accuracy. In Methylobacterium nodulans (strain LMG 21967 / CNCM I-2342 / ORS 2060), this protein is Small ribosomal subunit protein uS4.